A 464-amino-acid polypeptide reads, in one-letter code: Cysteine--tRNA ligase (464 aa).

Cys-28 is a binding site for Zn(2+). The 'HIGH' region signature appears at Pro-30–His-40. Positions 205, 230, and 234 each coordinate Zn(2+). Residues Lys-263–Ser-267 carry the 'KMSKS' region motif. Lys-266 provides a ligand contact to ATP.

The protein belongs to the class-I aminoacyl-tRNA synthetase family. Zn(2+) serves as cofactor.

Its subcellular location is the cytoplasm. It carries out the reaction tRNA(Cys) + L-cysteine + ATP = L-cysteinyl-tRNA(Cys) + AMP + diphosphate. The polypeptide is Cysteine--tRNA ligase (Ignicoccus hospitalis (strain KIN4/I / DSM 18386 / JCM 14125)).